A 358-amino-acid polypeptide reads, in one-letter code: Gap junction alpha-5 protein (358 aa).

At 1–19 the chain is on the cytoplasmic side; the sequence is MGDWSFLGEFLEEVHKHST. The helical transmembrane segment at 20 to 40 threads the bilayer; the sequence is VIGKVWLTVLFIFRMLVLGTA. Residues 41 to 76 lie on the Extracellular side of the membrane; sequence AESSWGDEQADFQCDTMQPGCGNVCYDQAFPISHIR. A helical membrane pass occupies residues 77–97; that stretch reads YWVLQIIFVSTPSLVYMGHAM. Topologically, residues 98 to 164 are cytoplasmic; sequence HTVRMQEKRK…CSILIRTTME (67 aa). The helical transmembrane segment at 165 to 185 threads the bilayer; it reads VAFIVGQYLLYGIFLDTLHVC. Residues 186-205 lie on the Extracellular side of the membrane; the sequence is RRSPCPHPVNCYVSRPTEKN. A helical transmembrane segment spans residues 206 to 226; that stretch reads VFIVFMLAVAALSLFLSLAEL. The Cytoplasmic segment spans residues 227 to 358; the sequence is YHLGWKKLRQ…SKARSDDLSV (132 aa). The tract at residues 318–358 is disordered; the sequence is AQKPEVPNGASPGHRLPHGYQSDKRRLSKASSKARSDDLSV. A phosphoserine mark is found at Ser353 and Ser357.

This sequence belongs to the connexin family. Alpha-type (group II) subfamily. As to quaternary structure, a connexon is composed of a hexamer of connexins.

Its subcellular location is the cell membrane. The protein localises to the cell junction. It localises to the gap junction. One gap junction consists of a cluster of closely packed pairs of transmembrane channels, the connexons, through which materials of low MW diffuse from one cell to a neighboring cell. This chain is Gap junction alpha-5 protein (GJA5), found in Canis lupus familiaris (Dog).